We begin with the raw amino-acid sequence, 1451 residues long: Dual 3',5'-cyclic-AMP and -GMP phosphodiesterase 11 (1451 aa).

5 disordered regions span residues 1 to 54 (MGQA…PQIQ), 75 to 100 (ATTP…GGYG), 125 to 169 (LPAH…QVQQ), 235 to 262 (GNDV…GATT), and 327 to 374 (QHHH…GSGG). Residues 11-21 (RGCRYKNKNKS) are compositionally biased toward basic residues. Residues 24 to 45 (QQQQQQQQQQQQQQQHQQQQQQ) show a composition bias toward low complexity. Residues 77–91 (TPLQFQPTGRMNTEQ) show a composition bias toward polar residues. Low complexity-rich tracts occupy residues 135-147 (SGAA…NGSS) and 160-169 (QQQQQYQVQQ). The segment covering 235-248 (GNDVVSSTSPTHAN) has biased composition (polar residues). Positions 327–340 (QHHHNHAHLHHSQH) are enriched in basic residues. The span at 341-355 (SHYQAGGAVGSSSLG) shows a compositional bias: low complexity. Positions 356 to 374 (STGGASGAGGAPSLGGSGG) are enriched in gly residues. 2 GAF domains span residues 419 to 572 (EVRT…GIGL) and 604 to 754 (TIEH…GMGI). The 325-residue stretch at 783-1107 (ATMDEAHRLR…GHWIDLADVV (325 aa)) folds into the PDEase domain. Histidine 860 acts as the Proton donor in catalysis. Residues histidine 864, histidine 900, aspartate 901, and aspartate 1011 each contribute to the a divalent metal cation site. Disordered regions lie at residues 1109–1171 (TKTS…SNTN), 1200–1248 (DEQA…TPVS), 1268–1305 (QTSN…QELD), and 1325–1364 (INNH…IGSA). Low complexity-rich tracts occupy residues 1142 to 1171 (ASEA…SNTN) and 1218 to 1234 (CRSN…SCLS). A compositionally biased stretch (polar residues) spans 1268 to 1277 (QTSNQAQTQK). Residues 1328-1355 (HSHHHNHSHSHNHNHHHHHHHHSHHNHS) show a composition bias toward basic residues.

This sequence belongs to the cyclic nucleotide phosphodiesterase family. The cofactor is a divalent metal cation. As to expression, in adults, it is enriched in Malpighian tubules.

It catalyses the reaction 3',5'-cyclic GMP + H2O = GMP + H(+). It carries out the reaction 3',5'-cyclic AMP + H2O = AMP + H(+). In terms of biological role, plays a role in signal transduction by regulating the intracellular concentration of cyclic nucleotides cAMP and cGMP. Dual-specificity phosphodiesterase that catalyzes the hydrolysis of both cAMP and cGMP to 5'-AMP and 5'-GMP, respectively. The sequence is that of Dual 3',5'-cyclic-AMP and -GMP phosphodiesterase 11 (Pde11) from Drosophila melanogaster (Fruit fly).